The following is a 414-amino-acid chain: Chromobox protein homolog 6 (414 aa).

Residues phenylalanine 11–proline 69 form the Chromo domain. Serine 107 carries the phosphoserine modification. Disordered stretches follow at residues histidine 127–proline 152, alanine 267–tryptophan 308, and alanine 344–serine 365. Over residues alanine 267–serine 287 the composition is skewed to low complexity.

Component of a PRC1-like complex. Distinct PRC1-like core complexes are composed of a RING1 subunit (RING1B or RING1A), one of the six PCGF proteins (PCGF1-6), one PHC protein (PHC1-3) and one of the CBX proteins (CBX2, CBX4, CBX6, CBX7 or CBX8). Interacts with PCGF1, PCGF2, PCGF3, BMI1, PCGF5, PCGF6, RING1 and RNF2. May interact with H3C15 and H3C1. Interacts (via chromodomain) with single-stranded RNA (ssRNA). Ubiquitinated. Ubiquitination regulates the function of the Polycomb group (PcG) multiprotein PRC1-like complex. Deubiquitinated by USP26. In terms of tissue distribution, expressed in mouse embryonic stem cells.

It is found in the nucleus. Its subcellular location is the chromosome. Its function is as follows. Component of a Polycomb group (PcG) multiprotein PRC1-like complex, a complex class required to maintain the transcriptionally repressive state of many genes, including Hox genes, throughout development. PcG PRC1 complex acts via chromatin remodeling and modification of histones; it mediates monoubiquitination of histone H2A 'Lys-119', rendering chromatin heritably changed in its expressibility. Possibly contributes to the target selectivity of the PRC1 complex by binding specific regions of chromatin. Recruitment to chromatin might occur in an H3K27me3-independent fashion. May have a PRC1-independent function in embryonic stem cells. The chain is Chromobox protein homolog 6 (Cbx6) from Mus musculus (Mouse).